The chain runs to 874 residues: Rho GTPase-activating protein 42 (874 aa).

In terms of domain architecture, BAR spans 7–262 (EFSDSYLDSP…MKSANQDYRP (256 aa)). Residues 225–261 (KQQLQFNLQNTRNNFESTRQEVERLMQRMKSANQDYR) adopt a coiled-coil conformation. The region spanning 265 to 374 (QWTMEGYLYV…WLEAMDGKEP (110 aa)) is the PH domain. Phosphotyrosine is present on Tyr-376. One can recognise a Rho-GAP domain in the interval 376–572 (YTLPAIISKK…ILIEHYEKIF (197 aa)). The disordered stretch occupies residues 575 to 720 (APDPSIPLPQ…GDVSPPIDLV (146 aa)). Residues 620–650 (DSYSSSPDSTPMGSIESLSSHSSEQNSTTKS) are compositionally biased toward low complexity. Residues 667 to 686 (TPSSSNGQKSLGLWTTSPES) show a composition bias toward polar residues. Position 683 is a phosphoserine (Ser-683). Residues 687–697 (SSREDATKTDA) show a composition bias toward basic and acidic residues. A compositionally biased stretch (polar residues) spans 700 to 711 (DCQSVASVTSPG). Phosphoserine occurs at positions 740, 753, 756, and 811. Polar residues predominate over residues 749 to 762 (SYSGSIQSLTSVGS). A disordered region spans residues 749–777 (SYSGSIQSLTSVGSKETPKASPNPDLPPK). Positions 816 to 874 (SSGRQAKAMYSCKAEHSHELSFPQGAIFSNVYPSVEPGWLKATYEGKTGLVPENYVVFL) constitute an SH3 domain. Tyr-870 is subject to Phosphotyrosine.

Highly and selectively expressed in smooth muscle cells.

Functionally, may influence blood pressure by functioning as a GTPase-activating protein for RHOA in vascular smooth muscle. The polypeptide is Rho GTPase-activating protein 42 (Homo sapiens (Human)).